The chain runs to 46 residues: Apamin (46 aa).

The signal sequence occupies residues 1–27 (MISMLRCIYLFLSVILITSYFVTPVMP). 2 disulfide bridges follow: C28–C38 and C30–C42. Residues 40–41 (RR) form an essential for toxin activity region. H45 bears the Histidine amide mark.

In terms of tissue distribution, expressed by the venom gland.

The protein resides in the secreted. Its function is as follows. Toxin with unique selectivity to KCa2 channels. Potently blocks human, rat and mouse KCa2.2/KCNN2/SK2 channels (IC(50)=27-140 pM), and moderately blocks human and rat KCa2.3/KCNN3/SK3 channels (IC(50)=0.6-4 nM), and human (IC(50)=0.7-12 nM) and mouse (IC(50)=28 nM) KCa2.1/KCNN1/SK1 channels. Does not show any antimicrobial activity. In vivo, intracerebroventricular injection into rats of a dose of 1 ng results in neurodegeneration specifically in the Purkinje cells of the cerebellum, and induces seizures characterized by hypersensitivity to noise, loss of postural control, paroxystic jerking, and alternating periods of great agitation with tonic-clonic convulsions and periods of total prostration. When administered at high doses, exerts anti-inflammatory, anti-oxidative, anti-fibrotic and anti-apoptotic properties in several models of inflammatory disease, including gouty arthritis, atherosclerosis, atopic dermatitis and acute kidney injury. Down-regulates pro-inflammatory signaling pathways, such as the NF-kappaB and STAT3 pathways, probably by blocking SK channels such as KCa2.2/KCNN2/SK2 and/or KCa2.3/KCNN3/SK3 which are thought to be involved in promoting some inflammatory responses. For example in mouse and rat microglia cells, inhibits LPS-activated KCa2.2/KCNN2/SK2 channels and TLR4 expression leading to the down-regulation of the NF-kappaB, STAT, and MAPK/ERK signaling pathways and, as a consequence, decreases secretion of pro-inflammatory cytokines. The sequence is that of Apamin from Apis mellifera (Honeybee).